A 394-amino-acid polypeptide reads, in one-letter code: MSKEKFERVKPHVNVGTIGHVDHGKTTLTAAICTTLAKVYGGAARDFASIDNAPEERERGITIATSHVEYDTPTRHYAHVDCPGHADYVKNMITGAAQMDGGILVVAATDGPMPQTREHILLGRQVGIPYIIVFMNKCDMVDDEELLELVEMEVRELLSEYDFPGDDLPVIQGSALGALNGEEQWEAKIVELAEALDSYIPEPERAVDMPFLMPIEDVFSIQGRGTVVTGRIERGILNVGDEVAIVGIKDTTTTTCTGVEMFRKLLDEGRAGENVGALLRGTKRDEVERGQVLAKPGSITPHTKFESEVYVLSKDEGGRHTPFFKGYRPQFYFRTTDVTGDISLPEGVEMVMPGDNIQMQVELIAPIAMDEGLRFAIREGGRTVGAGVVAKIFD.

Positions 10–204 (KPHVNVGTIG…ALDSYIPEPE (195 aa)) constitute a tr-type G domain. A G1 region spans residues 19 to 26 (GHVDHGKT). 19-26 (GHVDHGKT) serves as a coordination point for GTP. Position 26 (Thr26) interacts with Mg(2+). The tract at residues 60-64 (GITIA) is G2. Residues 81–84 (DCPG) form a G3 region. GTP is bound by residues 81 to 85 (DCPGH) and 136 to 139 (NKCD). Positions 136–139 (NKCD) are G4. The tract at residues 174-176 (SAL) is G5.

The protein belongs to the TRAFAC class translation factor GTPase superfamily. Classic translation factor GTPase family. EF-Tu/EF-1A subfamily. Monomer.

It is found in the cytoplasm. It catalyses the reaction GTP + H2O = GDP + phosphate + H(+). GTP hydrolase that promotes the GTP-dependent binding of aminoacyl-tRNA to the A-site of ribosomes during protein biosynthesis. The protein is Elongation factor Tu of Vibrio campbellii (strain ATCC BAA-1116).